Consider the following 240-residue polypeptide: tRNA (guanine-N(1)-)-methyltransferase (240 aa).

S-adenosyl-L-methionine-binding positions include Gly108 and 127–132 (IGDYVL).

It belongs to the RNA methyltransferase TrmD family. Homodimer.

It localises to the cytoplasm. The enzyme catalyses guanosine(37) in tRNA + S-adenosyl-L-methionine = N(1)-methylguanosine(37) in tRNA + S-adenosyl-L-homocysteine + H(+). In terms of biological role, specifically methylates guanosine-37 in various tRNAs. This Lactobacillus johnsonii (strain CNCM I-12250 / La1 / NCC 533) protein is tRNA (guanine-N(1)-)-methyltransferase.